The following is a 1220-amino-acid chain: MAAAAGAPPPGPPQPPPPPPPEESSDSEPEAEPGSPQKLIRKVSTSGQIRQKTILKEGMLTKQNNSFQRSKRRYFKLRGRTLYYAKTAKSIIFDEVDLTDASVAESSTKNVNNSFTVITPCRKLILCADNRKEMEDWIAALKTVQNKEHFEPTQYSMDHFSGMHNWYACSHARPTYCNVCREVLSGVTSHGLSCEVCKFKAHKRCAVRATSNCKWTTLASIGKDIIEDEDGIAMPHQWLEGNLPVSAKCIVCDKTCGSVLRLQDWRCLWCKAMVHTSCKESLVMKCPLGLCKVSVIPPTALNSIDSDGFWKATCPPSCTSPLLVFVNSKSGDNQGVKFLRRFKQLLNPAQVFDLMNGGPHLGLRLFQKFDTFRILVCGGDGSVGWVLSEIDSLNLHKQCQLGVLPLGTGNDLARVLGWGSACDDDTQLPQILAKLERASTKMLDRWSVMAYETKLPRQASSSTVTEDFSEDSEVQQILFYEDSVAAHLSKILTSDQHSVVISSAKVLCETVKDFVARVGKAYEKTTESSQESEVMAKKCSVLKEKLDSLLKTLDDESQASSSLSNPPPTIAEEAEDGDGSGNICSSTGDHLVGSACPSRPQIFRPREQLMLRANSLKKAIRQIIEHTEKAVDEQNAQTQEQQGFVLGLSESEKKDLKTDNRVCTSSVHSESCVIAKGRSQRKASRAPCEKLVSKGLSLGSSASLPPGTGSRDSLPALNTKILYPSVRAGMSGSLPGGSVISRLLINADPFNAEPENLEYYTEKCVMNNYFGIGLDAKISLDFNNKRDEHPEKCRSRTKNMMWYGVLGTKELLHRTYRNLEQKVLLECDGRPIPLPSLQGIAVLNIPSYAGGTNFWGGTKEDDTFAAPSFDDKILEVVAVFGSMQMAVSRVIKLQHHRIAQCRTVKISILGDEGVPVQVDGEAWIQPPGYIRIVHKNRAQTLTRDRAFENTLKSWEDKQKCELSRPPSFSLHPEILSEEEATQMDQFGQAAGGLIHSIREIAQSHRAMEQELAHAVNASSKAMERVYGKPRTAEGLNCSFVLEMVNNIRALRSETELLLAGKMALQLDPPQKERLGAALIEMDQQLRKLTDTPWLCQPLEPGEEESLQQNVMLDLTKRSRSGKFRLVTKFKKEKNNKNKEVHSNLGGPVHLWGTEEVAAWLEHLSLCEYKDIFTRHDIRGSELLHLERRDLKDLGVTKVGHMKRILCGIKELSRSSPAAEA.

Residues M1–G47 are disordered. The tract at residues M1 to K52 is regulates association with membranes. Residues A7 to E22 show a composition bias toward pro residues. The 94-residue stretch at T53–N146 folds into the PH domain. 2 consecutive Phorbol-ester/DAG-type zinc fingers follow at residues M163–C213 and P235–C286. Residues S317–Y451 enclose the DAGKc domain. Residues D554 to C584 form a disordered region. The SAM domain maps to W1151–S1214.

The protein belongs to the eukaryotic diacylglycerol kinase family. In terms of assembly, homooligomer. Monomer. Interacts with AP2A2; regulates clathrin-dependent endocytosis. As to expression, widely expressed.

It is found in the cell membrane. Its subcellular location is the membrane. The protein localises to the clathrin-coated pit. It localises to the cytoplasm. It carries out the reaction a 1,2-diacyl-sn-glycerol + ATP = a 1,2-diacyl-sn-glycero-3-phosphate + ADP + H(+). The enzyme catalyses 1,2-di-(9Z-octadecenoyl)-sn-glycerol + ATP = 1,2-di-(9Z-octadecenoyl)-sn-glycero-3-phosphate + ADP + H(+). It catalyses the reaction 1-octadecanoyl-2-(5Z,8Z,11Z,14Z-eicosatetraenoyl)-sn-glycerol + ATP = 1-octadecanoyl-2-(5Z,8Z,11Z,14Z-eicosatetraenoyl)-sn-glycero-3-phosphate + ADP + H(+). It participates in lipid metabolism; glycerolipid metabolism. Functionally, diacylglycerol kinase that converts diacylglycerol/DAG into phosphatidic acid/phosphatidate/PA and regulates the respective levels of these two bioactive lipids. Thereby, acts as a central switch between the signaling pathways activated by these second messengers with different cellular targets and opposite effects in numerous biological processes. By controlling the levels of diacylglycerol, regulates for instance the PKC and EGF receptor signaling pathways and plays a crucial role during development. May also regulate clathrin-dependent endocytosis. The chain is Diacylglycerol kinase delta from Mus musculus (Mouse).